Consider the following 512-residue polypeptide: GMP synthase [glutamine-hydrolyzing] (512 aa).

The 191-residue stretch at 7-197 folds into the Glutamine amidotransferase type-1 domain; that stretch reads TILILDFGGQ…LFEVCDCSAD (191 aa). The active-site Nucleophile is the Cys-84. Catalysis depends on residues His-171 and Glu-173. In terms of domain architecture, GMPS ATP-PPase spans 198-387; sequence WTMDSLIEQT…LGIPDEILYR (190 aa). ATP is bound at residue 225 to 231; it reads SGGVDSA.

In terms of assembly, homodimer.

It catalyses the reaction XMP + L-glutamine + ATP + H2O = GMP + L-glutamate + AMP + diphosphate + 2 H(+). It functions in the pathway purine metabolism; GMP biosynthesis; GMP from XMP (L-Gln route): step 1/1. Functionally, catalyzes the synthesis of GMP from XMP. This chain is GMP synthase [glutamine-hydrolyzing], found in Caldanaerobacter subterraneus subsp. tengcongensis (strain DSM 15242 / JCM 11007 / NBRC 100824 / MB4) (Thermoanaerobacter tengcongensis).